Consider the following 122-residue polypeptide: Large ribosomal subunit protein bL17 (122 aa).

Belongs to the bacterial ribosomal protein bL17 family. Part of the 50S ribosomal subunit. Contacts protein L32.

The protein is Large ribosomal subunit protein bL17 of Neisseria meningitidis serogroup B (strain ATCC BAA-335 / MC58).